Consider the following 302-residue polypeptide: Recombination-associated protein RdgC (302 aa).

This sequence belongs to the RdgC family.

It localises to the cytoplasm. It is found in the nucleoid. Functionally, may be involved in recombination. The polypeptide is Recombination-associated protein RdgC (Actinobacillus succinogenes (strain ATCC 55618 / DSM 22257 / CCUG 43843 / 130Z)).